Reading from the N-terminus, the 147-residue chain is Leech anti-platelet protein (147 aa).

Positions 1 to 21 are cleaved as a signal peptide; that stretch reads MNSFLFSLACSLLVAIPAISA. The segment at 21 to 71 is disordered; sequence AQDEDAGGAGDETSEGEDTTGSDETPSTGGGGDGGNEETITAGNEDCWSKR. Positions 22–41 are enriched in acidic residues; that stretch reads QDEDAGGAGDETSEGEDTTG. Intrachain disulfides connect cysteine 67-cysteine 145, cysteine 92-cysteine 117, and cysteine 96-cysteine 105.

The N-terminus is blocked. As to expression, expressed by salivary glands.

It is found in the secreted. Inhibits collagen-stimulated platelet aggregation (IC(50)=60 nM), dense granule release and serotonin release. Does not inhibit platelet aggregation induced by ADP, arachidonic acid, and thrombin. In Haementeria officinalis (Mexican leech), this protein is Leech anti-platelet protein.